Here is a 197-residue protein sequence, read N- to C-terminus: Probable chemoreceptor glutamine deamidase CheD 2 (197 aa).

The protein belongs to the CheD family.

The catalysed reaction is L-glutaminyl-[protein] + H2O = L-glutamyl-[protein] + NH4(+). Probably deamidates glutamine residues to glutamate on methyl-accepting chemotaxis receptors (MCPs), playing an important role in chemotaxis. The polypeptide is Probable chemoreceptor glutamine deamidase CheD 2 (Dechloromonas aromatica (strain RCB)).